The primary structure comprises 545 residues: ATP synthase subunit alpha (545 aa).

An ATP-binding site is contributed by 173 to 180 (GDRQTGKT).

This sequence belongs to the ATPase alpha/beta chains family. In terms of assembly, F-type ATPases have 2 components, CF(1) - the catalytic core - and CF(0) - the membrane proton channel. CF(1) has five subunits: alpha(3), beta(3), gamma(1), delta(1), epsilon(1). CF(0) has three main subunits: a(1), b(2) and c(9-12). The alpha and beta chains form an alternating ring which encloses part of the gamma chain. CF(1) is attached to CF(0) by a central stalk formed by the gamma and epsilon chains, while a peripheral stalk is formed by the delta and b chains.

It localises to the cell membrane. The catalysed reaction is ATP + H2O + 4 H(+)(in) = ADP + phosphate + 5 H(+)(out). Produces ATP from ADP in the presence of a proton gradient across the membrane. The alpha chain is a regulatory subunit. The polypeptide is ATP synthase subunit alpha (Paenarthrobacter aurescens (strain TC1)).